Consider the following 265-residue polypeptide: uncharacterized protein (265 aa).

A divalent metal cation is bound by residues histidine 7, histidine 9, glutamate 94, histidine 130, histidine 155, and aspartate 205.

This sequence belongs to the metallo-dependent hydrolases superfamily. TatD-type hydrolase family. A divalent metal cation serves as cofactor.

This is an uncharacterized protein from Escherichia coli O157:H7.